The sequence spans 90 residues: MNKTELIHQVAERTQMSKKDAGEVVNTVFDVIAESLAQGDSVQLIGFGNFEVRERAARKGRNPQTGEEIDIAATKTPAFKAGKQLKDAVK.

Thr4 is modified (phosphothreonine).

It belongs to the bacterial histone-like protein family. Homodimer.

Histone-like DNA-binding protein which is capable of wrapping DNA to stabilize it, and thus to prevent its denaturation under extreme environmental conditions. The chain is DNA-binding protein HU-1 (hup2) from Halalkalibacterium halodurans (strain ATCC BAA-125 / DSM 18197 / FERM 7344 / JCM 9153 / C-125) (Bacillus halodurans).